Here is a 157-residue protein sequence, read N- to C-terminus: MSSDRPIVLAAIIGAHGLQGEVRLKLFTEDMGAYRTLDGAGRSFTLKTIRPGPNGAVARFAEIGDRNAAEALRGTELSVPRSALPPLAPGEYYHVDLIGLPCLVDGAPVGVAAMVEDFGAGDVLEIEKPDGKRFMVPVAKAVTIEPDRLLIDPEFVE.

Positions 89–156 (PGEYYHVDLI…DRLLIDPEFV (68 aa)) constitute a PRC barrel domain.

Belongs to the RimM family. As to quaternary structure, binds ribosomal protein uS19.

The protein localises to the cytoplasm. Its function is as follows. An accessory protein needed during the final step in the assembly of 30S ribosomal subunit, possibly for assembly of the head region. Essential for efficient processing of 16S rRNA. May be needed both before and after RbfA during the maturation of 16S rRNA. It has affinity for free ribosomal 30S subunits but not for 70S ribosomes. The chain is Ribosome maturation factor RimM from Rhizorhabdus wittichii (strain DSM 6014 / CCUG 31198 / JCM 15750 / NBRC 105917 / EY 4224 / RW1) (Sphingomonas wittichii).